We begin with the raw amino-acid sequence, 217 residues long: Ras-related protein RABA2a (217 aa).

Position 19 to 26 (19 to 26 (GDSGVGKS)) interacts with GTP. The Effector region signature appears at 41 to 49 (SKSTIGVEF). Residues 67–71 (DTAGQ), 125–128 (NKTD), and 155–156 (SA) each bind GTP. A lipid anchor (S-palmitoyl cysteine) is attached at Cys-213. Position 214 is a cysteine methyl ester (Cys-214). Cys-214 carries the S-geranylgeranyl cysteine lipid modification. A propeptide spans 215–217 (SSS) (removed in mature form).

It belongs to the small GTPase superfamily. Rab family. Expressed in root tips.

It localises to the endosome membrane. The protein resides in the golgi apparatus. Its subcellular location is the trans-Golgi network membrane. Its function is as follows. Intracellular vesicle trafficking and protein transport. The chain is Ras-related protein RABA2a (RABA2A) from Arabidopsis thaliana (Mouse-ear cress).